Consider the following 97-residue polypeptide: Co-chaperonin GroES (97 aa).

The protein belongs to the GroES chaperonin family. As to quaternary structure, heptamer of 7 subunits arranged in a ring. Interacts with the chaperonin GroEL.

The protein resides in the cytoplasm. Functionally, together with the chaperonin GroEL, plays an essential role in assisting protein folding. The GroEL-GroES system forms a nano-cage that allows encapsulation of the non-native substrate proteins and provides a physical environment optimized to promote and accelerate protein folding. GroES binds to the apical surface of the GroEL ring, thereby capping the opening of the GroEL channel. The sequence is that of Co-chaperonin GroES from Aeromonas salmonicida.